Consider the following 180-residue polypeptide: Transmembrane protein 190 (180 aa).

The first 21 residues, 1–21 (MVGSGIPALGLLLLMQGSADG), serve as a signal peptide directing secretion. The Extracellular portion of the chain corresponds to 22–81 (NGIQGFFYPWSCEGDVWDRESCGGQAAIENPNLCLRLRCCYRDGVCYHQRPDENMRRKHM). Positions 31–71 (WSCEGDVWDRESCGGQAAIENPNLCLRLRCCYRDGVCYHQR) constitute a P-type domain. 3 cysteine pairs are disulfide-bonded: cysteine 33-cysteine 61, cysteine 43-cysteine 60, and cysteine 55-cysteine 67. Residues 82–102 (WALGWTCGGLLFLITSICLFW) traverse the membrane as a helical segment. Over 103 to 180 (WARRHDMLRL…EETEGGDEDD (78 aa)) the chain is Cytoplasmic. The segment covering 131 to 140 (KDRTPSEKKT) has biased composition (basic and acidic residues). The disordered stretch occupies residues 131 to 180 (KDRTPSEKKTPSVGSIPPAAPTEGALDVSGGTEGEGTEGGEETEGGDEDD). The span at 165–180 (EGTEGGEETEGGDEDD) shows a compositional bias: acidic residues.

It is found in the membrane. This Bos taurus (Bovine) protein is Transmembrane protein 190 (TMEM190).